A 186-amino-acid polypeptide reads, in one-letter code: ADP-ribosylation factor-like protein 8B-A (186 aa).

The segment at residues 1-19 (MLALINRLLDWFKSLFWKE) is an intramembrane region (note=Mediates targeting to membranes). Residues 29 to 35 (QYSGKTT), 71 to 75 (DIGGQ), and 130 to 133 (NKRD) each bind GTP.

Belongs to the small GTPase superfamily. Arf family.

It localises to the late endosome membrane. It is found in the lysosome membrane. The protein resides in the cytoplasm. Its subcellular location is the cytoskeleton. The protein localises to the spindle. It localises to the early endosome membrane. Small GTPase which cycles between active GTP-bound and inactive GDP-bound states. In its active state, binds to a variety of effector proteins playing a key role in the regulation of lysosomal positioning which is important for nutrient sensing, natural killer cell-mediated cytotoxicity and antigen presentation. Along with its effectors, orchestrates lysosomal transport and fusion. The protein is ADP-ribosylation factor-like protein 8B-A (arl8ba) of Danio rerio (Zebrafish).